A 299-amino-acid polypeptide reads, in one-letter code: Nitrogenase iron protein (299 aa).

Residue 8 to 15 (GKGGIGKS) coordinates ATP. [4Fe-4S] cluster is bound at residue Cys-96. Position 99 is an ADP-ribosylarginine; by dinitrogenase reductase ADP-ribosyltransferase (Arg-99). [4Fe-4S] cluster is bound at residue Cys-130.

Belongs to the NifH/BchL/ChlL family. Homodimer. It depends on [4Fe-4S] cluster as a cofactor. Post-translationally, the reversible ADP-ribosylation of Arg-99 inactivates the nitrogenase reductase and regulates nitrogenase activity.

The catalysed reaction is N2 + 8 reduced [2Fe-2S]-[ferredoxin] + 16 ATP + 16 H2O = H2 + 8 oxidized [2Fe-2S]-[ferredoxin] + 2 NH4(+) + 16 ADP + 16 phosphate + 6 H(+). In terms of biological role, the key enzymatic reactions in nitrogen fixation are catalyzed by the nitrogenase complex, which has 2 components: the iron protein and the molybdenum-iron protein. This Gloeothece citriformis (strain PCC 7424) (Cyanothece sp. (strain PCC 7424)) protein is Nitrogenase iron protein.